Here is a 273-residue protein sequence, read N- to C-terminus: 5-deoxy-glucuronate isomerase (273 aa).

Belongs to the isomerase IolB family.

The enzyme catalyses 5-deoxy-D-glucuronate = 5-dehydro-2-deoxy-D-gluconate. The protein operates within polyol metabolism; myo-inositol degradation into acetyl-CoA; acetyl-CoA from myo-inositol: step 4/7. Functionally, involved in the isomerization of 5-deoxy-glucuronate (5DG) to 5-dehydro-2-deoxy-D-gluconate (DKG or 2-deoxy-5-keto-D-gluconate). The protein is 5-deoxy-glucuronate isomerase of Listeria innocua serovar 6a (strain ATCC BAA-680 / CLIP 11262).